Reading from the N-terminus, the 515-residue chain is Maturase K (515 aa).

It belongs to the intron maturase 2 family. MatK subfamily.

The protein resides in the plastid. It is found in the chloroplast. Usually encoded in the trnK tRNA gene intron. Probably assists in splicing its own and other chloroplast group II introns. The sequence is that of Maturase K from Pinus uncinata (Mountain pine).